We begin with the raw amino-acid sequence, 407 residues long: Tyrosine--tRNA ligase 1 (407 aa).

Tyrosine 35 lines the L-tyrosine pocket. A 'HIGH' region motif is present at residues 40 to 49; the sequence is PTGDSLHVGH. L-tyrosine contacts are provided by tyrosine 168 and glutamine 172. The 'KMSKS' region signature appears at 228 to 232; that stretch reads KMGKT. Lysine 231 contributes to the ATP binding site. An S4 RNA-binding domain is found at 340 to 406; the sequence is SSILDVLVHT…GKKKYYKIVI (67 aa).

Belongs to the class-I aminoacyl-tRNA synthetase family. TyrS type 1 subfamily. Homodimer.

It localises to the cytoplasm. The catalysed reaction is tRNA(Tyr) + L-tyrosine + ATP = L-tyrosyl-tRNA(Tyr) + AMP + diphosphate + H(+). In terms of biological role, catalyzes the attachment of tyrosine to tRNA(Tyr) in a two-step reaction: tyrosine is first activated by ATP to form Tyr-AMP and then transferred to the acceptor end of tRNA(Tyr). The protein is Tyrosine--tRNA ligase 1 of Clostridium acetobutylicum (strain ATCC 824 / DSM 792 / JCM 1419 / IAM 19013 / LMG 5710 / NBRC 13948 / NRRL B-527 / VKM B-1787 / 2291 / W).